Reading from the N-terminus, the 721-residue chain is Ribonuclease R (721 aa).

The RNB domain maps to arginine 249–phenylalanine 587. The 81-residue stretch at glycine 639–valine 719 folds into the S1 motif domain.

Belongs to the RNR ribonuclease family. RNase R subfamily.

It localises to the cytoplasm. It catalyses the reaction Exonucleolytic cleavage in the 3'- to 5'-direction to yield nucleoside 5'-phosphates.. Functionally, 3'-5' exoribonuclease that releases 5'-nucleoside monophosphates and is involved in maturation of structured RNAs. This is Ribonuclease R from Ureaplasma parvum serovar 3 (strain ATCC 700970).